We begin with the raw amino-acid sequence, 273 residues long: Formamidopyrimidine-DNA glycosylase (273 aa).

The active-site Schiff-base intermediate with DNA is proline 2. Glutamate 3 serves as the catalytic Proton donor. The active-site Proton donor; for beta-elimination activity is the lysine 57. Histidine 91, arginine 110, and lysine 151 together coordinate DNA. The FPG-type zinc finger occupies 236 to 270 (QVYGRKDEACNDCGTIIEAKVIGQRNSYFCPHCQM). Arginine 260 functions as the Proton donor; for delta-elimination activity in the catalytic mechanism.

Belongs to the FPG family. As to quaternary structure, monomer. Requires Zn(2+) as cofactor.

It carries out the reaction Hydrolysis of DNA containing ring-opened 7-methylguanine residues, releasing 2,6-diamino-4-hydroxy-5-(N-methyl)formamidopyrimidine.. The enzyme catalyses 2'-deoxyribonucleotide-(2'-deoxyribose 5'-phosphate)-2'-deoxyribonucleotide-DNA = a 3'-end 2'-deoxyribonucleotide-(2,3-dehydro-2,3-deoxyribose 5'-phosphate)-DNA + a 5'-end 5'-phospho-2'-deoxyribonucleoside-DNA + H(+). Its function is as follows. Involved in base excision repair of DNA damaged by oxidation or by mutagenic agents. Acts as a DNA glycosylase that recognizes and removes damaged bases. Has a preference for oxidized purines, such as 7,8-dihydro-8-oxoguanine (8-oxoG). Has AP (apurinic/apyrimidinic) lyase activity and introduces nicks in the DNA strand. Cleaves the DNA backbone by beta-delta elimination to generate a single-strand break at the site of the removed base with both 3'- and 5'-phosphates. The chain is Formamidopyrimidine-DNA glycosylase from Actinobacillus pleuropneumoniae serotype 3 (strain JL03).